A 169-amino-acid polypeptide reads, in one-letter code: Peptide methionine sulfoxide reductase MsrA (169 aa).

The active site involves Cys-11.

The protein belongs to the MsrA Met sulfoxide reductase family.

The enzyme catalyses L-methionyl-[protein] + [thioredoxin]-disulfide + H2O = L-methionyl-(S)-S-oxide-[protein] + [thioredoxin]-dithiol. It catalyses the reaction [thioredoxin]-disulfide + L-methionine + H2O = L-methionine (S)-S-oxide + [thioredoxin]-dithiol. Functionally, has an important function as a repair enzyme for proteins that have been inactivated by oxidation. Catalyzes the reversible oxidation-reduction of methionine sulfoxide in proteins to methionine. This Leifsonia xyli subsp. xyli (strain CTCB07) protein is Peptide methionine sulfoxide reductase MsrA.